The sequence spans 640 residues: 1-deoxy-D-xylulose-5-phosphate synthase (640 aa).

Thiamine diphosphate contacts are provided by residues His72 and 113–115 (GHA). A Mg(2+)-binding site is contributed by Asp144. Residues 145–146 (GA), Asn174, Tyr287, and Glu370 contribute to the thiamine diphosphate site. Residue Asn174 participates in Mg(2+) binding.

Belongs to the transketolase family. DXPS subfamily. Homodimer. The cofactor is Mg(2+). It depends on thiamine diphosphate as a cofactor.

The catalysed reaction is D-glyceraldehyde 3-phosphate + pyruvate + H(+) = 1-deoxy-D-xylulose 5-phosphate + CO2. The protein operates within metabolic intermediate biosynthesis; 1-deoxy-D-xylulose 5-phosphate biosynthesis; 1-deoxy-D-xylulose 5-phosphate from D-glyceraldehyde 3-phosphate and pyruvate: step 1/1. Catalyzes the acyloin condensation reaction between C atoms 2 and 3 of pyruvate and glyceraldehyde 3-phosphate to yield 1-deoxy-D-xylulose-5-phosphate (DXP). This Synechococcus sp. (strain RCC307) protein is 1-deoxy-D-xylulose-5-phosphate synthase.